The following is a 131-amino-acid chain: Large ribosomal subunit protein bL17 (131 aa).

The protein belongs to the bacterial ribosomal protein bL17 family. In terms of assembly, part of the 50S ribosomal subunit. Contacts protein L32.

The sequence is that of Large ribosomal subunit protein bL17 from Herminiimonas arsenicoxydans.